The primary structure comprises 74 residues: Progonadoliberin-3 (74 aa).

The first 15 residues, 1–15 (VQVVVLALVAQVTLS), serve as a signal peptide directing secretion. Glutamine 16 carries the post-translational modification Pyrrolidone carboxylic acid. A Glycine amide modification is found at glycine 25.

Belongs to the GnRH family.

It is found in the secreted. In terms of biological role, stimulates the secretion of gonadotropins. In Oncorhynchus mykiss (Rainbow trout), this protein is Progonadoliberin-3 (gnrh3).